A 297-amino-acid chain; its full sequence is Ribosomal RNA small subunit methyltransferase H (297 aa).

Residues 34–36, Asp54, Phe88, Asp106, and Gln113 each bind S-adenosyl-L-methionine; that span reads AGH. A disordered region spans residues 272 to 297; that stretch reads PLTAGEEETDRNPRARSAKLRAAEKK.

This sequence belongs to the methyltransferase superfamily. RsmH family.

It is found in the cytoplasm. It catalyses the reaction cytidine(1402) in 16S rRNA + S-adenosyl-L-methionine = N(4)-methylcytidine(1402) in 16S rRNA + S-adenosyl-L-homocysteine + H(+). Its function is as follows. Specifically methylates the N4 position of cytidine in position 1402 (C1402) of 16S rRNA. This chain is Ribosomal RNA small subunit methyltransferase H, found in Acidobacterium capsulatum (strain ATCC 51196 / DSM 11244 / BCRC 80197 / JCM 7670 / NBRC 15755 / NCIMB 13165 / 161).